The following is a 1300-amino-acid chain: Serine protease EspP (1300 aa).

The first 55 residues, 1 to 55, serve as a signal peptide directing secretion; sequence MNKIYSLKYSHITGGLIAVSELSGRVSSRATGKKKHKRILALCFLGLLQSSYSFA. In terms of domain architecture, Peptidase S6 spans 57 to 311; it reads QMDISNFYIR…NQTTIDNLKN (255 aa). Catalysis depends on charge relay system residues His-127, Asp-156, and Ser-263. In terms of domain architecture, Autotransporter spans 1034 to 1300; the sequence is DINGEAGAWA…AVNANFRYSF (267 aa).

In terms of processing, cleaved to release the mature protein from the outer membrane.

The protein resides in the periplasm. It is found in the secreted. It localises to the cell surface. The protein localises to the cell outer membrane. Its activity is regulated as follows. Inhibition of cytotoxic activity by phenylmethylsulfonyl fluoride. Serine protease capable of cleaving pepsin A and human coagulation factor V, which may contribute to the mucosal hemorrhage observed in hemorrhagic colitis. In Escherichia coli O157:H7, this protein is Serine protease EspP (espP).